The primary structure comprises 335 residues: GTPase Obg (335 aa).

Residues 1 to 158 (MFVDQITLEL…RLVELELKLI (158 aa)) form the Obg domain. The OBG-type G domain occupies 159–334 (ADIGLVGFPN…LHDLFKSKLS (176 aa)). Residues 165–172 (GFPNAGKS), 190–194 (FTTLH), 215–218 (DIPG), 285–288 (NKID), and 315–317 (SGL) each bind GTP. Positions 172 and 192 each coordinate Mg(2+).

It belongs to the TRAFAC class OBG-HflX-like GTPase superfamily. OBG GTPase family. In terms of assembly, monomer. Mg(2+) serves as cofactor.

Its subcellular location is the cytoplasm. An essential GTPase which binds GTP, GDP and possibly (p)ppGpp with moderate affinity, with high nucleotide exchange rates and a fairly low GTP hydrolysis rate. Plays a role in control of the cell cycle, stress response, ribosome biogenesis and in those bacteria that undergo differentiation, in morphogenesis control. The protein is GTPase Obg of Chlamydia muridarum (strain MoPn / Nigg).